Consider the following 386-residue polypeptide: Short integuments 2, mitochondrial (386 aa).

One can recognise a CP-type G domain in the interval Thr37–Pro207. Positions Asp55 to Pro59 match the DARXP motif motif. The segment at Asn81–Asp84 is G4. Residues Asn81–Asp84, Asn109–Ala110, and Asn146–Ala151 contribute to the GTP site. The segment at Asn109–His111 is G5. The G1 stretch occupies residues Gly143–Ser150. Positions Gly180–Asp184 are G2. A G3 region spans residues Asp200–Gly203. GTP is bound at residue Gly203.

The protein belongs to the TRAFAC class YlqF/YawG GTPase family. MTG1 subfamily. Expressed in seedlings, roots, leaves, stems, inflorescences and siliques.

The protein resides in the mitochondrion. Its function is as follows. GTPase that may function in mitochondrial ribosome assembly. Involved in a variety of growth processes during vegetative development and promotes growth and cell division in the developing integuments. This Arabidopsis thaliana (Mouse-ear cress) protein is Short integuments 2, mitochondrial.